Here is a 416-residue protein sequence, read N- to C-terminus: Tryptophan synthase beta chain (416 aa).

An N6-(pyridoxal phosphate)lysine modification is found at Lys-109.

It belongs to the TrpB family. In terms of assembly, tetramer of two alpha and two beta chains. The cofactor is pyridoxal 5'-phosphate.

The enzyme catalyses (1S,2R)-1-C-(indol-3-yl)glycerol 3-phosphate + L-serine = D-glyceraldehyde 3-phosphate + L-tryptophan + H2O. Its pathway is amino-acid biosynthesis; L-tryptophan biosynthesis; L-tryptophan from chorismate: step 5/5. The beta subunit is responsible for the synthesis of L-tryptophan from indole and L-serine. This Prochlorococcus marinus (strain SARG / CCMP1375 / SS120) protein is Tryptophan synthase beta chain.